The chain runs to 257 residues: 5'-nucleotidase SurE (257 aa).

A divalent metal cation contacts are provided by aspartate 13, aspartate 14, serine 44, and asparagine 100.

It belongs to the SurE nucleotidase family. It depends on a divalent metal cation as a cofactor.

It localises to the cytoplasm. The enzyme catalyses a ribonucleoside 5'-phosphate + H2O = a ribonucleoside + phosphate. Nucleotidase that shows phosphatase activity on nucleoside 5'-monophosphates. This chain is 5'-nucleotidase SurE, found in Phocaeicola vulgatus (strain ATCC 8482 / DSM 1447 / JCM 5826 / CCUG 4940 / NBRC 14291 / NCTC 11154) (Bacteroides vulgatus).